Here is a 466-residue protein sequence, read N- to C-terminus: MKMPQTIGLVHFIGIGGIGMSGIAEVLHNLGYKVQGSDQADSANVQRLRDKGIECFVGHKAENLGDAEVVVVSTAIKKTNPELKAAREKLLPIVRRAEMLAELMRFRQAVAIGGTHGKTTTTSMVATLLEAGGLDPTVINGGIINAYGTNARMGDGEWMVVEADESDGTFLKLPADIAVVTNIDPEHLDHYGSFDKVREAFRQFVENVPFYGFGVMCTDHPEVQALVGRIEDRRVITYGENAQADVRFTNHRMAGATSEFDVVIRDRKTGSQSTISGLRLPMPGRHNVSNATAAIAVAHELGLSGEAIKKGLSSFAGVKRRFTHTGSWNGVDVFDDYGHHPVEISAVLKAARSATKGRVIAIAQPHRFTRLHDLFNEFSACFNDADTVIVAPVYAAGEDPIDGVSSDELVSRIRAGGHRDARYIEGPTAIAPIIRGLAKPGDFVVFLGAGNITQWAYALPKELAAS.

114–120 (GTHGKTT) contacts ATP.

Belongs to the MurCDEF family.

The protein resides in the cytoplasm. The catalysed reaction is UDP-N-acetyl-alpha-D-muramate + L-alanine + ATP = UDP-N-acetyl-alpha-D-muramoyl-L-alanine + ADP + phosphate + H(+). It participates in cell wall biogenesis; peptidoglycan biosynthesis. Cell wall formation. This chain is UDP-N-acetylmuramate--L-alanine ligase, found in Mesorhizobium japonicum (strain LMG 29417 / CECT 9101 / MAFF 303099) (Mesorhizobium loti (strain MAFF 303099)).